Reading from the N-terminus, the 275-residue chain is Large ribosomal subunit protein uL2 (275 aa).

The interval 223–260 is disordered; it reads VAMNPVDHPHGGGEGRTSGGRHPVSPWGLPTKGYKTRS.

It belongs to the universal ribosomal protein uL2 family. In terms of assembly, part of the 50S ribosomal subunit. Forms a bridge to the 30S subunit in the 70S ribosome.

Its function is as follows. One of the primary rRNA binding proteins. Required for association of the 30S and 50S subunits to form the 70S ribosome, for tRNA binding and peptide bond formation. It has been suggested to have peptidyltransferase activity; this is somewhat controversial. Makes several contacts with the 16S rRNA in the 70S ribosome. This chain is Large ribosomal subunit protein uL2, found in Legionella pneumophila (strain Paris).